A 510-amino-acid polypeptide reads, in one-letter code: ATP synthase subunit alpha (510 aa).

Gly-169–Thr-176 is a binding site for ATP.

Belongs to the ATPase alpha/beta chains family. As to quaternary structure, F-type ATPases have 2 components, CF(1) - the catalytic core - and CF(0) - the membrane proton channel. CF(1) has five subunits: alpha(3), beta(3), gamma(1), delta(1), epsilon(1). CF(0) has three main subunits: a(1), b(2) and c(9-12). The alpha and beta chains form an alternating ring which encloses part of the gamma chain. CF(1) is attached to CF(0) by a central stalk formed by the gamma and epsilon chains, while a peripheral stalk is formed by the delta and b chains.

Its subcellular location is the cell inner membrane. The catalysed reaction is ATP + H2O + 4 H(+)(in) = ADP + phosphate + 5 H(+)(out). In terms of biological role, produces ATP from ADP in the presence of a proton gradient across the membrane. The alpha chain is a regulatory subunit. The polypeptide is ATP synthase subunit alpha (Rickettsia peacockii (strain Rustic)).